Reading from the N-terminus, the 409-residue chain is 5-aminolevulinate synthase (409 aa).

Substrate-binding residues include arginine 21 and serine 136. Serine 188, histidine 216, and threonine 244 together coordinate pyridoxal 5'-phosphate. Residue lysine 247 is part of the active site. Residue lysine 247 is modified to N6-(pyridoxal phosphate)lysine. Residues threonine 276 and threonine 277 each contribute to the pyridoxal 5'-phosphate site. Threonine 362 serves as a coordination point for substrate.

Belongs to the class-II pyridoxal-phosphate-dependent aminotransferase family. Homodimer. It depends on pyridoxal 5'-phosphate as a cofactor.

It catalyses the reaction succinyl-CoA + glycine + H(+) = 5-aminolevulinate + CO2 + CoA. It functions in the pathway porphyrin-containing compound metabolism; protoporphyrin-IX biosynthesis; 5-aminolevulinate from glycine: step 1/1. The polypeptide is 5-aminolevulinate synthase (hemA) (Bradyrhizobium diazoefficiens (strain JCM 10833 / BCRC 13528 / IAM 13628 / NBRC 14792 / USDA 110)).